We begin with the raw amino-acid sequence, 1677 residues long: ELMO domain-containing protein E (1677 aa).

Disordered regions lie at residues 112–139, 168–194, 264–372, 592–625, 775–801, 888–947, 982–1002, 1047–1075, 1122–1141, 1197–1248, 1261–1404, 1434–1454, 1467–1593, and 1654–1677; these read TTTSSSSSSSSPSSSSSSSSSSSSSSPS, NSKDTNNSGTINNNNNNNNNSGGSNIK, QLHG…NTTE, DDDNDNNNNQELNNNNNNNNNNNYNIKTKPRSNS, PNSNNPTDNIITTNTNTTTTTTTSTNN, INKN…NQDI, KIRSSSSTPDTSSPPLNSQPE, STNNHHIGGGGGGGSSDNLLSRSPEETRS, KQKSPKLQGGSGPWKKGNVS, NNNI…DNHA, DDDD…RKKR, SPGSYDAHLNNPHLSVSPQPE, KNPE…GDVS, and ESQRDLQHQASSSNLKFSLASSSK. 2 stretches are compositionally biased toward low complexity: residues 115–139 and 172–194; these read SSSSSSSSPSSSSSSSSSSSSSSPS and TNNSGTINNNNNNNNNSGGSNIK. Gly residues predominate over residues 269–278; it reads SIGGGGGGSG. Composition is skewed to low complexity over residues 307-334, 341-352, and 597-616; these read SQSNSPQSSSFVKSQQIQQQQQYQKPNN, TTTTTTTTTTTS, and NNNNQELNNNNNNNNNNNYN. An ELMO domain is found at 492-710; that stretch reads SHQILLSDLW…HTREIIEKVC (219 aa). Over residues 891–903 the composition is skewed to gly residues; sequence NGGGGGGGGGGGV. The segment covering 922-933 has biased composition (acidic residues); sequence IDDSDDENDNDE. Low complexity-rich tracts occupy residues 934–946 and 985–996; these read VNNNNNSNRINQD and SSSSTPDTSSPP. A coiled-coil region spans residues 1186-1212; that stretch reads LLDDVLDLNQTNNNIDNENDDINEAII. The span at 1228–1238 shows a compositional bias: acidic residues; the sequence is EEEEEEEEEEE. Low complexity predominate over residues 1285-1305; it reads NNTTTTTTTTTTTTTTTTNTT. Residues 1306–1334 show a composition bias toward polar residues; sequence GQKRISILSTDTNRPGSSNYGESSLSNGS. A compositionally biased stretch (acidic residues) spans 1387–1397; sequence DDEDDEDDDDK. Over residues 1445-1454 the composition is skewed to polar residues; the sequence is PHLSVSPQPE. Composition is skewed to low complexity over residues 1475–1488, 1503–1574, and 1663–1677; these read LSSSYDSSTSPLLS, SNLI…PSSS, and ASSSNLKFSLASSSK.

The protein is ELMO domain-containing protein E (elmoE) of Dictyostelium discoideum (Social amoeba).